Consider the following 439-residue polypeptide: Probable anion transporter 7 (439 aa).

The N-terminal stretch at 1–28 is a signal peptide; sequence MTALTRMKFPKRYVIVLLTFICTNVCYI. 11 helical membrane-spanning segments follow: residues 53–73, 81–101, 104–124, 143–163, 167–187, 232–252, 280–300, 312–332, 338–358, 367–387, and 412–432; these read MILSMFYYGYVLSQIPGGWAA, VLLLSFVLWSLICGLIPLDPK, VILVLSRLFVGVAQGFIFPAI, LTTSGMYLGAAGGMLFFPSLV, GAQSVFFVEAVLGVAWSVIWL, IIFSLPVWAIVVNNFTFHYAL, LPYFNMFIFSNIGGVVADHLI, KLLNTIGFVVSAVALMALPLF, TVLCSSISLGFLALGRAGFAV, FAGIVMGVSNTAGTLAGIVGV, and TVFFVPGYLCIFSSIIFLIFS.

Belongs to the major facilitator superfamily. Sodium/anion cotransporter (TC 2.A.1.14) family.

It is found in the cell membrane. Its function is as follows. Probable anion transporter. In Oryza sativa subsp. japonica (Rice), this protein is Probable anion transporter 7 (PHT4;7).